Here is a 105-residue protein sequence, read N- to C-terminus: uncharacterized protein (105 aa).

The helical transmembrane segment at 13–35 (LLFAFVVVIVVLTLSYVYAQNII) threads the bilayer.

The protein resides in the membrane. This is an uncharacterized protein from Archaeoglobus fulgidus (strain ATCC 49558 / DSM 4304 / JCM 9628 / NBRC 100126 / VC-16).